Reading from the N-terminus, the 133-residue chain is Large ribosomal subunit protein bL17 (133 aa).

It belongs to the bacterial ribosomal protein bL17 family. As to quaternary structure, part of the 50S ribosomal subunit. Contacts protein L32.

The polypeptide is Large ribosomal subunit protein bL17 (Nitratidesulfovibrio vulgaris (strain DSM 19637 / Miyazaki F) (Desulfovibrio vulgaris)).